Consider the following 510-residue polypeptide: Histidine ammonia-lyase (510 aa).

The 5-imidazolinone (Ala-Gly) cross-link spans 144–146 (ASG). Residue serine 145 is modified to 2,3-didehydroalanine (Ser).

It belongs to the PAL/histidase family. Post-translationally, contains an active site 4-methylidene-imidazol-5-one (MIO), which is formed autocatalytically by cyclization and dehydration of residues Ala-Ser-Gly.

The protein localises to the cytoplasm. It carries out the reaction L-histidine = trans-urocanate + NH4(+). The protein operates within amino-acid degradation; L-histidine degradation into L-glutamate; N-formimidoyl-L-glutamate from L-histidine: step 1/3. This chain is Histidine ammonia-lyase, found in Chromobacterium violaceum (strain ATCC 12472 / DSM 30191 / JCM 1249 / CCUG 213 / NBRC 12614 / NCIMB 9131 / NCTC 9757 / MK).